The sequence spans 89 residues: MALSVEEKAQIVAEYQQTAGDTGSPEVQVALLTANINKLQGHLKPTTKTTTPVRGLIRMVNHRRKLLDYLKGKDTTRYSALIGRLGLRR.

Belongs to the universal ribosomal protein uS15 family. As to quaternary structure, part of the 30S ribosomal subunit. Forms a bridge to the 50S subunit in the 70S ribosome, contacting the 23S rRNA.

One of the primary rRNA binding proteins, it binds directly to 16S rRNA where it helps nucleate assembly of the platform of the 30S subunit by binding and bridging several RNA helices of the 16S rRNA. Its function is as follows. Forms an intersubunit bridge (bridge B4) with the 23S rRNA of the 50S subunit in the ribosome. The polypeptide is Small ribosomal subunit protein uS15 (Pseudomonas putida (Arthrobacter siderocapsulatus)).